Consider the following 473-residue polypeptide: Suppressor of SWI4 1 homolog (473 aa).

The Brix domain occupies proline 29–glutamate 292. Serine 238 and serine 240 each carry phosphoserine. Residues alanine 323–alanine 473 form a disordered region. A compositionally biased stretch (low complexity) spans glutamine 324–glutamine 334. Positions arginine 335–aspartate 360 are enriched in basic and acidic residues. The span at glycine 376–glutamate 388 shows a compositional bias: acidic residues. The span at lysine 407–arginine 421 shows a compositional bias: basic residues. Residues arginine 422–histidine 444 show a composition bias toward basic and acidic residues. Residue lysine 438 is modified to N6-acetyllysine. Residues glycine 464–alanine 473 show a composition bias toward basic residues.

The protein localises to the nucleus. The protein resides in the nucleolus. May have a role in cell growth. This Pongo abelii (Sumatran orangutan) protein is Suppressor of SWI4 1 homolog (PPAN).